A 451-amino-acid chain; its full sequence is NADP-specific glutamate dehydrogenase (451 aa).

Residue lysine 113 is part of the active site. The residue at position 252 (serine 252) is a Phosphoserine.

It belongs to the Glu/Leu/Phe/Val dehydrogenases family. Homohexamer.

It catalyses the reaction L-glutamate + NADP(+) + H2O = 2-oxoglutarate + NH4(+) + NADPH + H(+). The chain is NADP-specific glutamate dehydrogenase (gdh1) from Schizosaccharomyces pombe (strain 972 / ATCC 24843) (Fission yeast).